A 451-amino-acid chain; its full sequence is MPSVVSPQDRLQDDAPAAQLRRAEPCLWLNPHRQPIPAARQAVAGDHISLDDTKEAAARFARFAPLLEGVFPELQATGGVIESPLLPASSLHAAAGLVAGQGALWIKADHRLPVAGSIKARGGIHEVLELAERLALQHGLLTPQSDADDYRALANPAARAVFARYTVAVGSTGNLGLSIGVAASALGFHAVVHMSADAKEWKKQRLRQRGVQVVEHAGDYEGAVAAGRAQAAQDPFSHFVDDERSLSLLLGYSAAALHLRQQLQDAGIAVDAQHPLFVYLPCGVGGAPAGITFGLRQVLGAHVHCFFAEPVQSPCFMVQMMAGQGAHPSVYDWGLTNRTEADGLAVPRASLPAAELMEPLLSGCFTVCDDTLFRQLVQVLDATGERIEPSAAAGLSGPGFLTGTETGRTWLHAQGLWPHLAQATHLVWTTGGLYVPPEAYARFEERGRALG.

K119 is subject to N6-(pyridoxal phosphate)lysine.

It belongs to the serine/threonine dehydratase family. DsdA subfamily. Pyridoxal 5'-phosphate is required as a cofactor.

The enzyme catalyses D-serine = pyruvate + NH4(+). This chain is Probable D-serine dehydratase, found in Acidovorax ebreus (strain TPSY) (Diaphorobacter sp. (strain TPSY)).